A 350-amino-acid chain; its full sequence is Dihydroorotase (350 aa).

The Zn(2+) site is built by histidine 17 and histidine 19. Residues 19-21 (HFR) and asparagine 45 each bind substrate. Zn(2+) contacts are provided by lysine 103, histidine 140, and histidine 178. Lysine 103 carries the post-translational modification N6-carboxylysine. Histidine 140 contacts substrate. Leucine 223 is a binding site for substrate. Position 251 (aspartate 251) interacts with Zn(2+). Residue aspartate 251 is part of the active site. Substrate is bound by residues histidine 255 and alanine 267.

It belongs to the metallo-dependent hydrolases superfamily. DHOase family. Class II DHOase subfamily. Homodimer. The cofactor is Zn(2+).

It carries out the reaction (S)-dihydroorotate + H2O = N-carbamoyl-L-aspartate + H(+). It participates in pyrimidine metabolism; UMP biosynthesis via de novo pathway; (S)-dihydroorotate from bicarbonate: step 3/3. Functionally, catalyzes the reversible cyclization of carbamoyl aspartate to dihydroorotate. This Photorhabdus laumondii subsp. laumondii (strain DSM 15139 / CIP 105565 / TT01) (Photorhabdus luminescens subsp. laumondii) protein is Dihydroorotase.